Here is a 200-residue protein sequence, read N- to C-terminus: Phospholipase A2 inhibitor gamma subunit B (200 aa).

Residues M1 to C19 form the signal peptide. 8 disulfides stabilise this stretch: C22/C46, C25/C32, C39/C67, C73/C94, C95/C100, C120/C145, C138/C165, and C171/C191. N-linked (GlcNAc...) asparagine glycosylation is present at N33.

This sequence belongs to the CNF-like-inhibitor family. Heterodimer of subunit A and subunit B. As to expression, expressed by the liver.

It is found in the secreted. In terms of biological role, inhibits the enzymatic activity of phospholipase A2 (PA2). The polypeptide is Phospholipase A2 inhibitor gamma subunit B (Gloydius brevicaudus siniticus (Chinese mamushi)).